Consider the following 189-residue polypeptide: MAPAWSFRLALLLLSCNAICSLGCHLPHTHSLANRRVLMLLGQLRRVSPSSCLQDRNDFAFPQEALGGSQLQKAQAISVLHEVTQHTFQLFSTEGSATMWDESLLDKLRDALDQQLTDLQFCLRQEEELQGAPLLKEDSSLAVRKYFHRLTLYLQEKRHSPCAWEVVRAQVMRAFSSSTNLQESFRRKD.

The first 23 residues, 1–23 (MAPAWSFRLALLLLSCNAICSLG), serve as a signal peptide directing secretion. Intrachain disulfides connect Cys-24/Cys-122 and Cys-52/Cys-162.

This sequence belongs to the alpha/beta interferon family.

It is found in the secreted. Functionally, produced by macrophages, IFN-alpha have antiviral activities. Interferon stimulates the production of two enzymes: a protein kinase and an oligoadenylate synthetase. The protein is Interferon alpha-C (IFNAC) of Bos taurus (Bovine).